The chain runs to 366 residues: NADH-quinone oxidoreductase subunit H (366 aa).

Helical transmembrane passes span L27–A47, F99–V119, L134–A154, A168–M188, F206–V226, I268–I288, I294–F314, and L329–M349.

The protein belongs to the complex I subunit 1 family. In terms of assembly, NDH-1 is composed of 14 different subunits. Subunits NuoA, H, J, K, L, M, N constitute the membrane sector of the complex.

Its subcellular location is the cell inner membrane. It carries out the reaction a quinone + NADH + 5 H(+)(in) = a quinol + NAD(+) + 4 H(+)(out). NDH-1 shuttles electrons from NADH, via FMN and iron-sulfur (Fe-S) centers, to quinones in the respiratory chain. The immediate electron acceptor for the enzyme in this species is believed to be ubiquinone. Couples the redox reaction to proton translocation (for every two electrons transferred, four hydrogen ions are translocated across the cytoplasmic membrane), and thus conserves the redox energy in a proton gradient. This subunit may bind ubiquinone. The polypeptide is NADH-quinone oxidoreductase subunit H (Nitrosomonas europaea (strain ATCC 19718 / CIP 103999 / KCTC 2705 / NBRC 14298)).